Consider the following 365-residue polypeptide: UPF0324 membrane protein Cj0999c (365 aa).

Transmembrane regions (helical) follow at residues 12–34 (IVRSNFKGLLFTACIVIFAMYLS), 44–63 (HLAATAFAIIIGVLLSPWFF), 83–100 (LGIVLYGFNITLTELLSV), 105–127 (FLLSAIVIFFVFIIALFVGTKIF), 134–153 (SMLVGAGSAICGAAAVLALE), 163–185 (GILAVGTVVIFGLVFMFLYPIAF), 197–219 (AMGVFMGATLHEVANVAGAAEMA), 234–256 (VIIKMMRVILLVPFLLIVTYFFA), 269–288 (SITIPYFAFAFLGMIVLNTY), 303–325 (IISLGKTLCTLCIVFAMAALGLQ), and 338–360 (VFGLAFVLGLVLIFGGYFLTLAF).

It belongs to the UPF0324 family.

It is found in the cell membrane. The polypeptide is UPF0324 membrane protein Cj0999c (Campylobacter jejuni subsp. jejuni serotype O:2 (strain ATCC 700819 / NCTC 11168)).